A 329-amino-acid polypeptide reads, in one-letter code: MKVEIVELVVLLFSVTCVDAWLQGADCTRVADHKEHAPVTEAVCYLRCLSDALNKLYSEGEKKLLVTEEVYANASLILDDMEGRAGESSTYLSVIRGVMEEQTDRLEKLISYGNKMGNLVAKAGGLFAALEDSLKEVRKEIPGALIKTNKYYTSVAEIVRTVWEDVGEILWKETEAKCGSQKVEGVGEIQTECGAHTCPFADNGVAASAVDKYKGHCLYVGRNSYLRHCFNLPRGRLYRHGPVNTLGDALEWEENWSDYMNFELTVKVQKIFGPLIASFDVGIAPSTLAEMINNITSLQSRFNEVHSNFTSILFTTKLKTEVYNTDSTI.

The signal sequence occupies residues 1-23; it reads MKVEIVELVVLLFSVTCVDAWLQ. N-linked (GlcNAc...) asparagine glycans are attached at residues Asn73, Asn294, and Asn308.

Its function is as follows. Not known but may be related to activation of the variant surface glycoprotein genes. The chain is VSG expression site-associated protein 221A from Trypanosoma brucei brucei.